Here is a 443-residue protein sequence, read N- to C-terminus: Xaa-Pro dipeptidase (443 aa).

Mn(2+) is bound by residues D246, D257, H339, E384, and E423.

The protein belongs to the peptidase M24B family. Bacterial-type prolidase subfamily. Mn(2+) is required as a cofactor.

The catalysed reaction is Xaa-L-Pro dipeptide + H2O = an L-alpha-amino acid + L-proline. Functionally, splits dipeptides with a prolyl residue in the C-terminal position. This is Xaa-Pro dipeptidase from Klebsiella pneumoniae (strain 342).